A 157-amino-acid polypeptide reads, in one-letter code: Probable intracellular pathogenesis-related protein T1 (157 aa).

N-linked (GlcNAc...) asparagine glycans are attached at residues Asn-79 and Asn-117.

It belongs to the BetVI family.

This Catharanthus roseus (Madagascar periwinkle) protein is Probable intracellular pathogenesis-related protein T1 (PCKR3).